Reading from the N-terminus, the 418-residue chain is Histidine--tRNA ligase (418 aa).

It belongs to the class-II aminoacyl-tRNA synthetase family. In terms of assembly, homodimer.

It is found in the cytoplasm. The catalysed reaction is tRNA(His) + L-histidine + ATP = L-histidyl-tRNA(His) + AMP + diphosphate + H(+). The polypeptide is Histidine--tRNA ligase (Thermoanaerobacter sp. (strain X514)).